The chain runs to 632 residues: MGKVIGIDLGTTNSCVAVMDGKTPKVIENAEGMRTTPSIVAFSDDGERLVGQPAKRQAVTNPERTIFAVKRLIGRRYDDPTVEKDKHLVPYKIAKAGNGDAWVEVDGKTYSPSQISAFTLQKMKETAEAHLGQKVDQAVITVPAYFNDAQRQATKDAGKIAGLEVLRIINEPTAAALAYGLDKAKQGTIAVYDLGGGTFDVSILEIGDGVFEVKSTNGDTFLGGEDFDMRLVSYLADEFQKEQGINLRNDKLALQRLKEAAEKAKIELSSTTQTEINLPFITADQSGPKHLTMKLTRAKFEALVDDLVQKTIEPCRKALKDAGLTAGEIGEVVLVGGMTRMPKVQEVVKQLFGKEPHKGVNPDEVVAIGAAIQAGVLQGDVKDVLLLDVTPLSLGIETLGGVFTRIIDRNTTIPTKKSQVFSTAEDSQNAVTIRVFQGEREMAADNKILGQFDLMGIPPAPRGMPQIEVTFDIDANGIVNVSAKDKATGKEQQIRIQASGGLSEADIDKMVKDAEANAIEDKKRREAVDAKNHADSLVHSTEKALAEHGSKIEDSERRAIEDAVSDLKEALKGDDAEAIKAKTNTLAQASMKLGEAMYKQQAEADAAKDAAKDDVVDAEFTEVDDDKNKKSA.

Thr198 carries the phosphothreonine; by autocatalysis modification. The segment at 524–557 is disordered; it reads RREAVDAKNHADSLVHSTEKALAEHGSKIEDSER.

Belongs to the heat shock protein 70 family.

Acts as a chaperone. This is Chaperone protein DnaK from Nitrobacter hamburgensis (strain DSM 10229 / NCIMB 13809 / X14).